A 277-amino-acid chain; its full sequence is Translation initiation factor 2 subunit alpha (277 aa).

One can recognise an S1 motif domain in the interval 22 to 93 (GEIVVGTVQE…KRGQVDVSLK (72 aa)).

The protein belongs to the eIF-2-alpha family. As to quaternary structure, heterotrimer composed of an alpha, a beta and a gamma chain.

In terms of biological role, eIF-2 functions in the early steps of protein synthesis by forming a ternary complex with GTP and initiator tRNA. The protein is Translation initiation factor 2 subunit alpha (eif2a) of Aeropyrum pernix (strain ATCC 700893 / DSM 11879 / JCM 9820 / NBRC 100138 / K1).